The following is a 2360-amino-acid chain: MAAVLQQVLERPELNKLPKSTQNKLEKFLAEQQSEIDCLKGRHEKFKVESEQQYFEIEKRLSQSQERLVNETRECQNLRLELEKLNNQVKVLTEKNKELETAQDRNLGIQSQFTRAKEELEAEKRDLIRTNERLSQEVEYLTEDVKRLNEKLKESNTTKGELQLKLDELQASDVTVKYREKRLEQEKELLHNQNSWLNTELKTKTDELLALGREKGNEILELKCTLENKKEEVLRLEEQMNGLKTSNEHLQKHVEDLLTKLKEAKEQQASMEEKFHNELNAHIKLSNLYKSAADDSEAKSNELTRAVDELHKLLKEAGEANKTIQDHLLQVEESKDQMEKEMLEKIGKLEKELENANDLLSATKRKGAILSEEELAAMSPTAAAVAKIVKPGMKLTELYNAYVETQDQLLLEKLENKRINKYLDEIVKEVEAKAPILKRQREEYERAQKAVASLSAKLEQAMKEIQRLQEDTDKANKHSSVLERDNQRMEIQIKDLSQQIRVLLMELEEARGNHVIRDEEVSSADISSSSEVISQHLVSYRNIEELQQQNQRLLFALRELGETREREEQETTSSKIAELQNKLENSLTELEQLRESRQHQMQLVDSIVRQRDMYRILLSQTTGMAIPLQASSLDDISLVSTPKRSSTSQTVSTPAPEPIIESTETIEAKAALKQLQEIFENYKKEKMDSEKLQNEQLEKLQEQVTDLRSQNTKISTQLDFASKRYEMLQDNVEGYRREITSLQERNQKLTATTQKQEQIINTMTQDLRGANEKLAVAEVRAENLKKEKEMLKLSEVRLSQQRESLLAEQRGQNLLLTNLQTIQGILERSETETKQRLSSQIEKLEHEISHLKKKLENEVEQRHTLTRNLDVQLLDTKRQLDTEINLHLNTKELLKNAQKDIATLKQHLNNMEAQLASQSTQRTGKGQPGDRDDVDDLKSQLRQAEEQVNDLKERLKTSASNVEQYRAMVTSLEDSLNKEKQVTEEVHKNIEVRLKESAEFQTQLEKKLMEVEKEKQELQDDKRKAIESMEQQLTELKKTLSSVQSEVQEALQRASTALSNEQQARRDCQEQAKIAVEAQNKYERELMLHAADVEALQAAKEQVSKMASVRQHLEETTQKAESQLLECKASWEERERVLKDEVSKSVSRCEDLEKQNRLLHDQIEKLSDKVVTSMKEVVQSPLNISLNEEGKSQEQILEILRFIRREKEIAETRFEVAQVESLRYRQRVELLERELQELQDSLNAEREKVQVTAKTMAQHEELMKKTETMNVVMETNKMLREEKERLEQNLQQMQAKVRKLELDILPLQEANAELSEKSGMLQAEKKLLEEDVKRWKARNQHLINQQKDPDTEEYRKLLSEKEIHTKRIQQLNEEVGRLKAEIARSNASLTNNQNLIQSLKEDLSKVRTEKESIQKDLDAKIIDIQEKVKTITQVKKIGRRYKTQFEELKAQQKAMETSTQSSGDHQEQHISVQEMQELKDNLSQSETKTKSLEGQVENLQKTLSEKETEARSLQEQTAQLQSELSRLRQELQDKTTKEEQLRQQMNEKDEKTWKAITVARSKIAHLSGVKDQLTKENEELKQRNGALDQQKDELDVRMTALKSQYEGRISRLERELREHQERHLEQRDEPQEPTNKAPEQQRQITLKTTPASGERGIASTSDPPTANIKPTPVVSTPSKVTAAAMAGNKSTPRASIRPMVTPATVTNPTTTPTATVMPTTQVESQEAMQSEGPVEHVPVFGSTSGSVRSTSPNVQPSISQPLLTVQQQTQATAFVQPTQQSHPQIEPANQELSPNIVEVVQSSPVERPSTSTAVFGTVSATPSSSLPKRAREEEEDSTIEAGDQVSDDTVEMPLPKKLKTVTPVGTEEEVMAEESTDGEAETQTYNQDSQDSIGEGVTQGDYTPMEDSEETSQSLQIDLGPLQSDQQTTSSQDGQGKGDDVIVIDSDDEDDDEENDGEHEDYEEDEDEDDDEEDDTGMGDEGEDSNEGTGSADGNDGYEADDAEGGDGTDPGTETEESMGGAESNQRAADSQNSGEGNTSAAESSFSQEVAREQQPTSASERQTPQAPQSPRRPPHPLPPRLTIHAPPQELGPPVQRIQMTRRQSVGRGLQLTPGIGGMQQHFFDDEDRTVPSTPTLVVPHRTDGFAEAIHSPQVAGVPRFRFGPPEDMPQTSSSHSDLGQLASQGGLGMYETPLFLAHEEESGGRSVPTTPLQVAAPVTVFTESTTSDASEHASQSVPMVTTSTGTLSTTNETPAGDDGDEVFVETESEGISSEAGLEIDSQQEEEPVQASDESDLPSTSQDPPSSSSVDTSSSQPKPFRRVRLQTTLRQGVRGRQFNRQRGISHAMGGRGGINRGNIN.

An N-acetylalanine modification is found at Ala2. The interval 3–13 is sufficient for interaction with TPR; it reads AVLQQVLERPE. A necessary for interaction with HSF1 region spans residues 14 to 117; sequence LNKLPKSTQN…GIQSQFTRAK (104 aa). Positions 24 to 370 form a coiled coil; sequence KLEKFLAEQQ…SATKRKGAIL (347 aa). Residues Lys252, Lys312, and Lys345 each carry the N6-acetyllysine modification. Phosphoserine is present on Ser379. A coiled-coil region spans residues 423 to 603; that stretch reads LDEIVKEVEA…RESRQHQMQL (181 aa). An N6-acetyllysine mark is found at Lys428, Lys457, and Lys477. The interval 437–513 is necessary for association to the NPC; sequence LKRQREEYER…LMELEEARGN (77 aa). Ser522, Ser523, and Ser632 each carry phosphoserine. The stretch at 664–1172 forms a coiled coil; that stretch reads ETIEAKAALK…IEKLSDKVVT (509 aa). An N6-acetyllysine mark is found at Lys713, Lys723, Lys748, and Lys755. A compositionally biased stretch (polar residues) spans 915–924; that stretch reads LASQSTQRTG. The interval 915-939 is disordered; sequence LASQSTQRTGKGQPGDRDDVDDLKS. Over residues 928-939 the composition is skewed to basic and acidic residues; that stretch reads PGDRDDVDDLKS. 2 positions are modified to phosphoserine: Ser1180 and Ser1185. Coiled coils occupy residues 1215-1420 and 1472-1629; these read EVAQ…LDAK and VQEM…QRDE. The interval 1218-1320 is necessary for interaction with HSF1; sequence QVESLRYRQR…NAELSEKSGM (103 aa). Disordered stretches follow at residues 1479-1520 and 1618-1673; these read KDNL…TAQL and EHQE…PTPV. Composition is skewed to basic and acidic residues over residues 1503–1512 and 1618–1630; these read LSEKETEARS and EHQERHLEQRDEP. Residues 1632-1651 are compositionally biased toward polar residues; sequence EPTNKAPEQQRQITLKTTPA. An N6-acetyllysine modification is found at Lys1689. Thr1691 is subject to Phosphothreonine. Residues 1801–1826 show a composition bias toward polar residues; the sequence is QSSPVERPSTSTAVFGTVSATPSSSL. The interval 1801–2122 is disordered; it reads QSSPVERPST…TPGIGGMQQH (322 aa). Residues 1811–1866 form a sufficient and essential for mediating its nuclear import region; the sequence is STAVFGTVSATPSSSLPKRAREEEEDSTIEAGDQVSDDTVEMPLPKKLKTVTPVGT. Positions 1866–1880 are enriched in acidic residues; sequence TEEEVMAEESTDGEA. A compositionally biased stretch (polar residues) spans 1881–1892; that stretch reads ETQTYNQDSQDS. Ser1892 bears the Phosphoserine mark. The span at 1923-1934 shows a compositional bias: low complexity; sequence QSDQQTTSSQDG. Composition is skewed to acidic residues over residues 1945-1986 and 1996-2017; these read DSDD…EDSN and DGYEADDAEGGDGTDPGTETEE. Residues 2023 to 2061 show a composition bias toward polar residues; sequence ESNQRAADSQNSGEGNTSAAESSFSQEVAREQQPTSASE. 5 positions are modified to phosphoserine: Ser2031, Ser2034, Ser2045, Ser2047, and Ser2070. Arg2103 and Arg2108 each carry omega-N-methylarginine. A phosphothreonine mark is found at Thr2113 and Thr2134. Ser2152 carries the post-translational modification Phosphoserine. Arg2160 bears the Omega-N-methylarginine mark. Polar residues predominate over residues 2224–2241; the sequence is ESTTSDASEHASQSVPMV. The interval 2224 to 2360 is disordered; the sequence is ESTTSDASEH…RGGINRGNIN (137 aa). Positions 2242–2254 are enriched in low complexity; it reads TTSTGTLSTTNET. 2 stretches are compositionally biased toward acidic residues: residues 2256 to 2269 and 2282 to 2296; these read AGDDGDEVFVETES and SQQEEEPVQASDESD. A compositionally biased stretch (low complexity) spans 2297 to 2317; that stretch reads LPSTSQDPPSSSSVDTSSSQP. Arg2340, Arg2342, and Arg2351 each carry asymmetric dimethylarginine. Positions 2349–2360 are enriched in gly residues; that stretch reads GGRGGINRGNIN.

This sequence belongs to the TPR family. Homodimer. Part of the nuclear pore complex (NPC). Associates with the XPO1/CRM1-mediated nuclear export complex, the Importin alpha/Importin beta receptor and the dynein 1 complex. Interacts (via C-terminal domain) with the KPNB1; the interaction occurs in a RanGTP-dependent manner. Interacts (via C-terminal region and phosphorylated form) with MAPK1/ERK2 (via phosphorylated form); the interaction requires dimerization of MAPK1/ERK2 and increases following EGF stimulation. Interacts with MAPK3/ERK1; the interaction increases following EGF stimulation. Interacts (via coiled coil region) with NUP153; the interaction is direct. Interacts with HSF1; the interaction increases in a stress-responsive manner and stimulates export of stress-induced HSP70 mRNA. Interacts with huntingtin/HTT; the interaction is inhibited by aggregated huntingtin/HTT forms with expanded polyglutamine stretch. Interacts with MAD1L1 (via N-terminal region), MAD2L1, and TTK; the interactions occurs in a microtubule-independent manner. Interacts (via middle region) with DYNLL1. Interacts with DCTN1, dynein, NUP153 and tubulin. Interacts with IFI204 (via C-terminal region). Interacts with IFI203. Interacts with MTA1. Interacts with ZC3HC1; this interaction mediates ZC3HC1 nuclear envelopes (NE)-association but also required for proper positioning of a substantial amount of TPR at the nuclear basket (NB). Post-translationally, phosphorylated. Phosphorylation occurs on serine and threonine residues (comprised in the C-terminal region) by MAPK1/ERK2 and stabilizes the interaction between these two proteins.

The protein resides in the nucleus. It is found in the nucleus membrane. The protein localises to the nucleus envelope. It localises to the nuclear pore complex. Its subcellular location is the cytoplasm. The protein resides in the cytoskeleton. It is found in the spindle. The protein localises to the chromosome. It localises to the centromere. Its subcellular location is the kinetochore. Component of the nuclear pore complex (NPC), a complex required for the trafficking across the nuclear envelope. Functions as a scaffolding element in the nuclear phase of the NPC essential for normal nucleocytoplasmic transport of proteins and mRNAs, plays a role in the establishment of nuclear-peripheral chromatin compartmentalization in interphase, and in the mitotic spindle checkpoint signaling during mitosis. Involved in the quality control and retention of unspliced mRNAs in the nucleus; in association with NUP153, regulates the nuclear export of unspliced mRNA species bearing constitutive transport element (CTE) in a NXF1- and KHDRBS1-independent manner. Negatively regulates both the association of CTE-containing mRNA with large polyribosomes and translation initiation. Does not play any role in Rev response element (RRE)-mediated export of unspliced mRNAs. Implicated in nuclear export of mRNAs transcribed from heat shock gene promoters; associates both with chromatin in the HSP70 promoter and with mRNAs transcribed from this promoter under stress-induced conditions. Modulates the nucleocytoplasmic transport of activated MAPK1/ERK2 and huntingtin/HTT and may serve as a docking site for the XPO1/CRM1-mediated nuclear export complex. Also plays a role as a structural and functional element of the perinuclear chromatin distribution; involved in the formation and/or maintenance of NPC-associated perinuclear heterochromatin exclusion zones (HEZs). Finally, acts as a spatial regulator of the spindle-assembly checkpoint (SAC) response ensuring a timely and effective recruitment of spindle checkpoint proteins like MAD1L1 and MAD2L1 to unattached kinetochore during the metaphase-anaphase transition before chromosome congression. Its N-terminus is involved in activation of oncogenic kinases. Plays a role in the regulation of nuclear protein export. The protein is Nucleoprotein TPR of Rattus norvegicus (Rat).